The following is a 362-amino-acid chain: Chalcone synthase A (362 aa).

Cys168 is an active-site residue.

This sequence belongs to the thiolase-like superfamily. Chalcone/stilbene synthases family.

The enzyme catalyses (E)-4-coumaroyl-CoA + 3 malonyl-CoA + 3 H(+) = 2',4,4',6'-tetrahydroxychalcone + 3 CO2 + 4 CoA. It participates in secondary metabolite biosynthesis; flavonoid biosynthesis. The primary product of this enzyme is 4,2',4',6'-tetrahydroxychalcone (also termed naringenin-chalcone or chalcone) which can under specific conditions spontaneously isomerize into naringenin. The polypeptide is Chalcone synthase A (CHSA) (Ipomoea platensis (Morning glory)).